The sequence spans 403 residues: Argininosuccinate synthase (403 aa).

Residues Ala-12–Ser-20 and Ala-39 each bind ATP. L-citrulline is bound by residues Tyr-91 and Ser-96. ATP is bound at residue Gly-121. 3 residues coordinate L-aspartate: Thr-123, Asn-127, and Asp-128. Asn-127 contributes to the L-citrulline binding site. Positions 131, 180, 189, 265, and 277 each coordinate L-citrulline.

This sequence belongs to the argininosuccinate synthase family. Type 1 subfamily. In terms of assembly, homotetramer.

It localises to the cytoplasm. It catalyses the reaction L-citrulline + L-aspartate + ATP = 2-(N(omega)-L-arginino)succinate + AMP + diphosphate + H(+). It participates in amino-acid biosynthesis; L-arginine biosynthesis; L-arginine from L-ornithine and carbamoyl phosphate: step 2/3. The chain is Argininosuccinate synthase from Vibrio vulnificus (strain CMCP6).